The sequence spans 3462 residues: DNA-directed RNA polymerase subunit beta'' (3462 aa).

Residues Cys263, Cys335, Cys342, and Cys345 each coordinate Zn(2+). Residues 541–1085 (KIDDQELSSV…PNKIFSSNLF (545 aa)) are insert-1. The interval 1528–1585 (PQSANERKQILKKARQKLRLFPLNLNEKKNRFSSVTLDLLRDQTTLHKMQSCGEAESG) is insert-2. The interval 1602 to 1699 (KKITEIFTFC…FSKQMGNRLL (98 aa)) is insert-3. An insert-4 region spans residues 1938–2168 (LKNKMNQSFS…SQASWILETN (231 aa)). An insert-5 region spans residues 2320 to 2870 (NLVSGKLNFL…KKKIAKEGAF (551 aa)). The segment at 2972–3196 (SKSQRGWFHN…IGQLLRYGKE (225 aa)) is insert-6.

It belongs to the RNA polymerase beta' chain family. RpoC2 subfamily. In terms of assembly, in plastids the minimal PEP RNA polymerase catalytic core is composed of four subunits: alpha, beta, beta', and beta''. When a (nuclear-encoded) sigma factor is associated with the core the holoenzyme is formed, which can initiate transcription. Requires Zn(2+) as cofactor.

It is found in the plastid. The protein resides in the chloroplast. It catalyses the reaction RNA(n) + a ribonucleoside 5'-triphosphate = RNA(n+1) + diphosphate. Its function is as follows. DNA-dependent RNA polymerase catalyzes the transcription of DNA into RNA using the four ribonucleoside triphosphates as substrates. This is DNA-directed RNA polymerase subunit beta'' from Tupiella akineta (Green alga).